The following is a 283-amino-acid chain: uncharacterized protein (283 aa).

This sequence belongs to the glycosyltransferase 2 family. WaaE/KdtX subfamily.

This is an uncharacterized protein from Rickettsia felis (strain ATCC VR-1525 / URRWXCal2) (Rickettsia azadi).